We begin with the raw amino-acid sequence, 99 residues long: Integration host factor subunit alpha (99 aa).

Belongs to the bacterial histone-like protein family. In terms of assembly, heterodimer of an alpha and a beta chain.

Its function is as follows. This protein is one of the two subunits of integration host factor, a specific DNA-binding protein that functions in genetic recombination as well as in transcriptional and translational control. This Psychrobacter arcticus (strain DSM 17307 / VKM B-2377 / 273-4) protein is Integration host factor subunit alpha.